The chain runs to 289 residues: N-methyltransferase FrzE (289 aa).

The protein belongs to the methyltransferase superfamily.

The catalysed reaction is (1S,4S)-4-[(4-hydroxyphenyl)methyl]-2,5-diazaspiro[bicyclo[3.2.1]octane-6,1'-cyclohexan]-4'-one + S-adenosyl-L-methionine = (1S,4S)-4-[(4-hydroxyphenyl)methyl]-2-methyl-2,5-diazaspiro[bicyclo[3.2.1]octane-6,1'-cyclohexan]-4'-one + S-adenosyl-L-homocysteine + H(+). It carries out the reaction (1S,4S)-4-[(4-methoxyphenyl)methyl]-2,5-diazaspiro[bicyclo[3.2.1]octane-6,1'-cyclohexan]-4'-one + S-adenosyl-L-methionine = (1S,4S)-4-[(4-methoxyphenyl)methyl]-2-methyl-2,5-diazaspiro[bicyclo[3.2.1]octane-6,1'-cyclohexan]-4'-one + S-adenosyl-L-homocysteine + H(+). It functions in the pathway secondary metabolite biosynthesis. Functionally, N-methyltransferase; part of the gene cluster that mediates the biosynthesis of the alkaloid (-)-FR901483, a potent immunosuppressant that shows efficacy in animal models and a probable inhibitor of purine nucleotide biosynthesis by targeting phosphoribosylpyrophosphate amidotransferase (PPAT). Within the pathway, FrzE methylates the amine at position C10'. The biosynthesis of (-)-FR901483 starts with the condensation of two L-tyrosines to yield (S,S)-dityrosyl-piperazine. This process occurs in 3 steps with the non-canonical nonribosomal peptide synthetase FrzA catalyzing the reduction of L-tyrosine into L-tyrosinal, the spontaneous condensation of 2 L-tyrosinal units, and the subsequent reduction by the NmrA-like family domain-containing oxidoreductase FrzB. The cytochrome P450 monooxygenase FrzC then performs coupling between N10 and C1' to morph the piperazine into a 1,4-diazabicyclo[3.2.1]octane spiro-fused to a 2,5-cyclohexadienone. The dienone portion is further reduced to cyclohexanone by the flavin-dependent reductase FrzD. The methyltranserases (MTs) FrzE and FrzF are then involved in the methylation at the C10' amine and the C4 phenolic oxygen, respectively. The order of the two MTs appear to be interchangeable. Cleavage of the C9-N10' bond by the dioxygenase FrzG then leads to formation of a conjugated iminium. In addition to the oxidation of C9, an additional dehydrogenation between C7 and C8 can occur to give a likely shunt product. The next biosynthetic step is the intramolecular aldol condensation catalyzed by the newly identified aldolase FrzH to yield an aza-tricyclic product with the formation of a C9-C3' bond. The short-chain dehydrogenase/reductase FrzI then produces dephospho-(-)-FR901483 that is phosphorylated at C4'-OH into (-)-FR901483 by the phosphotransferase FrzJ. The protein is N-methyltransferase FrzE of Cladobotryum sp.